The following is a 618-amino-acid chain: Arginine--tRNA ligase (618 aa).

The 'HIGH' region signature appears at 113 to 123 (ANPIHPLHIGH).

The protein belongs to the class-I aminoacyl-tRNA synthetase family.

It is found in the cytoplasm. The catalysed reaction is tRNA(Arg) + L-arginine + ATP = L-arginyl-tRNA(Arg) + AMP + diphosphate. In Sulfolobus acidocaldarius (strain ATCC 33909 / DSM 639 / JCM 8929 / NBRC 15157 / NCIMB 11770), this protein is Arginine--tRNA ligase.